A 330-amino-acid chain; its full sequence is Ketol-acid reductoisomerase (NADP(+)) (330 aa).

The KARI N-terminal Rossmann domain occupies 1–182 (MKKVYYDQDA…GCTRAGVFET (182 aa)). Residues 25 to 28 (YGSQ), Ser-51, Ser-53, and 83 to 86 (DQIQ) each bind NADP(+). His-108 is an active-site residue. An NADP(+)-binding site is contributed by Gly-134. A KARI C-terminal knotted domain is found at 183-328 (TFKEETETDL…AELRQMMPWL (146 aa)). Mg(2+)-binding residues include Asp-191, Glu-195, Glu-227, and Glu-231. Ser-252 lines the substrate pocket.

Belongs to the ketol-acid reductoisomerase family. It depends on Mg(2+) as a cofactor.

It carries out the reaction (2R)-2,3-dihydroxy-3-methylbutanoate + NADP(+) = (2S)-2-acetolactate + NADPH + H(+). The catalysed reaction is (2R,3R)-2,3-dihydroxy-3-methylpentanoate + NADP(+) = (S)-2-ethyl-2-hydroxy-3-oxobutanoate + NADPH + H(+). It functions in the pathway amino-acid biosynthesis; L-isoleucine biosynthesis; L-isoleucine from 2-oxobutanoate: step 2/4. The protein operates within amino-acid biosynthesis; L-valine biosynthesis; L-valine from pyruvate: step 2/4. Involved in the biosynthesis of branched-chain amino acids (BCAA). Catalyzes an alkyl-migration followed by a ketol-acid reduction of (S)-2-acetolactate (S2AL) to yield (R)-2,3-dihydroxy-isovalerate. In the isomerase reaction, S2AL is rearranged via a Mg-dependent methyl migration to produce 3-hydroxy-3-methyl-2-ketobutyrate (HMKB). In the reductase reaction, this 2-ketoacid undergoes a metal-dependent reduction by NADPH to yield (R)-2,3-dihydroxy-isovalerate. The chain is Ketol-acid reductoisomerase (NADP(+)) from Carboxydothermus hydrogenoformans (strain ATCC BAA-161 / DSM 6008 / Z-2901).